Reading from the N-terminus, the 388-residue chain is Mycinamicin VIII C21 methyl hydroxylase (388 aa).

Heme contacts are provided by histidine 87, arginine 91, arginine 279, histidine 335, and cysteine 337.

The protein belongs to the cytochrome P450 family. Heme is required as a cofactor.

It participates in antibiotic biosynthesis; mycinamicin biosynthesis. Functionally, involved in the biosynthesis of mycinamicin, a 16-membered macrolide antibiotic. Catalyzes hydroxylation at the C21 methyl group of mycinamicin VIII, the earliest macrolide form in the postpolyketide synthase tailoring pathway, leading to mycinamicin VII. Uses ferredoxin MycCII in electron transfer for catalysis. This Micromonospora griseorubida protein is Mycinamicin VIII C21 methyl hydroxylase.